The primary structure comprises 197 residues: Fucoxanthin-chlorophyll a-c binding protein C, chloroplastic (197 aa).

The N-terminal 31 residues, 1–31, are a transit peptide targeting the chloroplast; it reads MKTAVIASLIAGAAAFAPAKNAARTSVATNM. The next 3 membrane-spanning stretches (helical) occupy residues 73-94, 113-133, and 174-196; these read ISMLAVVGYLVQEAGVRLPGTI, IPAGGLVQLLFFIGVLESSVM, and GRAAQMGILAFMVHEQLGVSLLP.

The protein belongs to the fucoxanthin chlorophyll protein family. As to quaternary structure, the LHC complex of chromophytic algae is composed of fucoxanthin, chlorophyll A and C bound non-covalently by fucoxanthin chlorophyll proteins (FCPs). The ratio of the pigments in LHC; fucoxanthin: chlorophyll C: chlorophyll A; (0.6-1): (0.1-0.3): (1).

It localises to the plastid. Its subcellular location is the chloroplast thylakoid membrane. Its function is as follows. The light-harvesting complex (LHC) functions as a light receptor, it captures and delivers excitation energy to photosystems with which it is closely associated. Energy is transferred from the carotenoid and chlorophyll C (or B) to chlorophyll A and the photosynthetic reaction centers where it is used to synthesize ATP and reducing power. The sequence is that of Fucoxanthin-chlorophyll a-c binding protein C, chloroplastic (FCPC) from Phaeodactylum tricornutum (Diatom).